Reading from the N-terminus, the 270-residue chain is Decarboxylase NovR (270 aa).

The protein belongs to the aldolase class II family.

It participates in antibiotic biosynthesis; novobiocin biosynthesis. May mediate the 2 consecutive oxidative decarboxylation steps in the biosynthesis of the prenylated hydroxybenzoic acid moiety of novobiocin, an aminocoumarin family antibiotic that targets bacterial DNA gyrases. The protein is Decarboxylase NovR (novR) of Streptomyces niveus (Streptomyces spheroides).